The sequence spans 247 residues: MSEKIAILSAYSFVNIEEPANLIPKLLLIGKRKYVRGTILLANEGFNGSFSGSYENVNLVLEELIKLTGPKDVNVKINYSDVHPFQKLKVRLKKEIVAMNVEGLNVDLFKGEYIEPKDWDEFITKQNVIVIDTRNDYEVEVGTFKSAISPNTKTFKQFPAWVQKNQGLLKGKRIAMVCTGGIRCEKSTSLLKSIGYDEVYHLKGGILQYLEDTQNKNNLWQGACFVFDDRRAVADDLSPVAGHWLQR.

The Rhodanese domain maps to 124–218 (TKQNVIVIDT…YLEDTQNKNN (95 aa)). C178 acts as the Cysteine persulfide intermediate in catalysis.

This sequence belongs to the TrhO family.

It catalyses the reaction uridine(34) in tRNA + AH2 + O2 = 5-hydroxyuridine(34) in tRNA + A + H2O. In terms of biological role, catalyzes oxygen-dependent 5-hydroxyuridine (ho5U) modification at position 34 in tRNAs. This Rickettsia akari (strain Hartford) protein is tRNA uridine(34) hydroxylase.